We begin with the raw amino-acid sequence, 114 residues long: MKKEYRLQKNEEFQAVFREGRSVANRQFVVYTLKADQTHFRVGLSVSKKLGNAVERNRMKRLMRESLRLLEPNVAPNDYVIIARKPATALTQSEVTESLKHVFKRAKVWQKQGR.

The protein belongs to the RnpA family. In terms of assembly, consists of a catalytic RNA component (M1 or rnpB) and a protein subunit.

It catalyses the reaction Endonucleolytic cleavage of RNA, removing 5'-extranucleotides from tRNA precursor.. Its function is as follows. RNaseP catalyzes the removal of the 5'-leader sequence from pre-tRNA to produce the mature 5'-terminus. It can also cleave other RNA substrates such as 4.5S RNA. The protein component plays an auxiliary but essential role in vivo by binding to the 5'-leader sequence and broadening the substrate specificity of the ribozyme. The sequence is that of Ribonuclease P protein component from Exiguobacterium sp. (strain ATCC BAA-1283 / AT1b).